A 276-amino-acid chain; its full sequence is Exosome complex component RRP43 (276 aa).

The residue at position 2 (A2) is an N-acetylalanine.

Belongs to the RNase PH family. In terms of assembly, component of the RNA exosome core complex (Exo-9), composed of EXOSC1, EXOSC2, EXOSC3, EXOSC4, EXOSC5, EXOSC6, EXOSC7, EXOSC8 and EXOSC9; within the complex interacts with EXOSC5 and EXOSC6. The catalytically inactive RNA exosome core complex (Exo-9) associates with the catalytic subunit EXOSC10/RRP6. Exo-9 may associate with DIS3 to form the nucleolar exosome complex, or DIS3L to form the cytoplasmic exosome complex. Exo-9 is formed by a hexameric base ring consisting of the heterodimers EXOSC4-EXOSC9, EXOSC5-EXOSC8 and EXOSC6-EXOSC7, and a cap ring consisting of EXOSC1, EXOSC2 and EXOSC3. The RNA exosome complex associates with cofactors C1D/RRP47, MPHOSPH6/MPP6 and MTREX/MTR4.

The protein resides in the cytoplasm. Its subcellular location is the nucleus. It localises to the nucleolus. In terms of biological role, non-catalytic component of the RNA exosome complex which has 3'-&gt;5' exoribonuclease activity and participates in a multitude of cellular RNA processing and degradation events. In the nucleus, the RNA exosome complex is involved in proper maturation of stable RNA species such as rRNA, snRNA and snoRNA, in the elimination of RNA processing by-products and non-coding 'pervasive' transcripts, such as antisense RNA species and promoter-upstream transcripts (PROMPTs), and of mRNAs with processing defects, thereby limiting or excluding their export to the cytoplasm. The RNA exosome may be involved in Ig class switch recombination (CSR) and/or Ig variable region somatic hypermutation (SHM) by targeting AICDA deamination activity to transcribed dsDNA substrates. In the cytoplasm, the RNA exosome complex is involved in general mRNA turnover and specifically degrades inherently unstable mRNAs containing AU-rich elements (AREs) within their 3' untranslated regions, and in RNA surveillance pathways, preventing translation of aberrant mRNAs. It seems to be involved in degradation of histone mRNA. The catalytic inactive RNA exosome core complex of 9 subunits (Exo-9) is proposed to play a pivotal role in the binding and presentation of RNA for ribonucleolysis, and to serve as a scaffold for the association with catalytic subunits and accessory proteins or complexes. EXOSC8 binds to ARE-containing RNAs. This Mus musculus (Mouse) protein is Exosome complex component RRP43 (Exosc8).